We begin with the raw amino-acid sequence, 27 residues long: Vasotocin-neurophysin VT (27 aa).

Cys-1 and Cys-6 are oxidised to a cystine. Gly-9 bears the Glycine amide mark.

The protein belongs to the vasopressin/oxytocin family.

Vasotocin is an antidiuretic hormone. This Sclerophrys regularis (Common African toad) protein is Vasotocin-neurophysin VT.